A 598-amino-acid chain; its full sequence is Leucine aminopeptidase 2, chloroplastic (598 aa).

Residues 1–71 (MATAASTSAA…GHRARMGHTA (71 aa)) constitute a chloroplast transit peptide. Mn(2+) contacts are provided by K367 and D372. The active site involves K379. Residues D392, D452, and E454 each contribute to the Mn(2+) site. Residue R456 is part of the active site.

It belongs to the peptidase M17 family. In terms of assembly, homohexamer (dimer of homotrimers). It depends on Mn(2+) as a cofactor.

The protein resides in the plastid. The protein localises to the chloroplast. It catalyses the reaction Release of an N-terminal amino acid, Xaa-|-Yaa-, in which Xaa is preferably Leu, but may be other amino acids including Pro although not Arg or Lys, and Yaa may be Pro. Amino acid amides and methyl esters are also readily hydrolyzed, but rates on arylamides are exceedingly low.. The catalysed reaction is Release of N-terminal proline from a peptide.. Its function is as follows. Presumably involved in the processing and regular turnover of intracellular proteins. Catalyzes the removal of unsubstituted N-terminal amino acids from various peptides. The chain is Leucine aminopeptidase 2, chloroplastic from Oryza sativa subsp. japonica (Rice).